Consider the following 569-residue polypeptide: Proline--tRNA ligase (569 aa).

The protein belongs to the class-II aminoacyl-tRNA synthetase family. ProS type 1 subfamily. As to quaternary structure, homodimer.

The protein localises to the cytoplasm. The catalysed reaction is tRNA(Pro) + L-proline + ATP = L-prolyl-tRNA(Pro) + AMP + diphosphate. Its function is as follows. Catalyzes the attachment of proline to tRNA(Pro) in a two-step reaction: proline is first activated by ATP to form Pro-AMP and then transferred to the acceptor end of tRNA(Pro). As ProRS can inadvertently accommodate and process non-cognate amino acids such as alanine and cysteine, to avoid such errors it has two additional distinct editing activities against alanine. One activity is designated as 'pretransfer' editing and involves the tRNA(Pro)-independent hydrolysis of activated Ala-AMP. The other activity is designated 'posttransfer' editing and involves deacylation of mischarged Ala-tRNA(Pro). The misacylated Cys-tRNA(Pro) is not edited by ProRS. This is Proline--tRNA ligase from Nitrosospira multiformis (strain ATCC 25196 / NCIMB 11849 / C 71).